The following is a 315-amino-acid chain: MTATSFLHQAKQQPHHTEPYIKALEAREYIIEQVPEELSKPKVAIICGSGLGTLASGLSAPVYEVPYEDIPHFHVSHVPGHASKLYFAFLGEKRVPTMILAGRYHSYEGYPIEATTFPVRLMKVMGVEVMVVTNAAGGLNQGFKVGDLMILKDHINFPGLAGMNPLRGPNAHEFGVRFPPLSDAYDLELRKLVYDAAKAHKVSRTIHEGCYAFVSGPCFETRAESRMLALMGADCVGMSTVPEVVVARHCGIRVLAISLVTNNVVVEESPSAKDLVEVDSNVMSKGAANHLEVLEVGIAAAADVRTMVETIVNFI.

Phosphate-binding positions include Ser-49, His-81, 103-105 (RYH), and Ala-135. Residue Glu-220 participates in a purine D-ribonucleoside binding. Ser-239 contacts phosphate. Residue Asn-262 coordinates a purine D-ribonucleoside.

This sequence belongs to the PNP/MTAP phosphorylase family.

The protein localises to the cytoplasm. The protein resides in the nucleus. It carries out the reaction a purine D-ribonucleoside + phosphate = a purine nucleobase + alpha-D-ribose 1-phosphate. The protein operates within purine metabolism; purine nucleoside salvage. Its function is as follows. The purine nucleoside phosphorylases catalyze the phosphorolytic breakdown of the N-glycosidic bond in the beta-(deoxy)ribonucleoside molecules, with the formation of the corresponding free purine bases and pentose-1-phosphate. Cleaves guanosine and inosine. The polypeptide is Putative purine nucleoside phosphorylase (Schizosaccharomyces pombe (strain 972 / ATCC 24843) (Fission yeast)).